Here is a 248-residue protein sequence, read N- to C-terminus: Ribosomal RNA small subunit methyltransferase G (248 aa).

S-adenosyl-L-methionine contacts are provided by residues G93, L98, 143 to 144, and R161; that span reads AE.

This sequence belongs to the methyltransferase superfamily. RNA methyltransferase RsmG family.

It is found in the cytoplasm. Functionally, specifically methylates the N7 position of guanine in position 518 of 16S rRNA. The chain is Ribosomal RNA small subunit methyltransferase G from Mycobacterium leprae (strain Br4923).